The primary structure comprises 386 residues: Leupaxin (386 aa).

The residue at position 1 (Met1) is an N-acetylmethionine. Positions 3 to 15 (ELDALLEELERST) match the LD motif 1 motif. The segment at 12–51 (ERSTLQDSDEYSNSAPLPLDQSSRKESNLDETSKMLSVQD) is disordered. Residues 16 to 26 (LQDSDEYSNSA) are compositionally biased toward polar residues. The residue at position 19 (Ser19) is a Phosphoserine. The residue at position 22 (Tyr22) is a Phosphotyrosine. The segment covering 33–44 (SSRKESNLDETS) has biased composition (basic and acidic residues). The residue at position 62 (Tyr62) is a Phosphotyrosine. Short sequence motifs (LD motif) lie at residues 70 to 82 (NVYS…KKSP) and 92 to 103 (QLDELMAHLSEM). Residue Tyr72 is modified to Phosphotyrosine; by LYN. Ser81 is subject to Phosphoserine. LIM zinc-binding domains follow at residues 150–209 (GHCA…LFSP), 210–267 (RCAY…AMFS), 268–327 (PKCG…RRGT), and 328–386 (LCHG…LFSL).

This sequence belongs to the paxillin family. As to quaternary structure, interacts with unphosphorylated ITGA4. Interacts with AR and SRF. Interacts with PTK2B/PYK2, PTPN22 and PTPN12. Interacts (via LD motif 3) with LYN and the interaction is induced upon B-cell antigen receptor (BCR) activation. Interacts (via LD motif 3) with PTK2/FAK. Post-translationally, phosphorylated on tyrosine residues. Phosphorylation on Tyr-72 is important for its inhibitory function. Bombesin stimulates phosphorylation on Tyr-22, Tyr-62 and Tyr-72.

The protein localises to the cytoplasm. The protein resides in the cell junction. It localises to the focal adhesion. Its subcellular location is the nucleus. It is found in the perinuclear region. The protein localises to the cell projection. The protein resides in the podosome. It localises to the cell membrane. Functionally, transcriptional coactivator for androgen receptor (AR) and serum response factor (SRF). Contributes to the regulation of cell adhesion, spreading and cell migration and acts as a negative regulator in integrin-mediated cell adhesion events. Suppresses the integrin-induced tyrosine phosphorylation of paxillin (PXN). May play a critical role as an adapter protein in the formation of the adhesion zone in osteoclasts. Negatively regulates B-cell antigen receptor (BCR) signaling. The polypeptide is Leupaxin (LPXN) (Oryctolagus cuniculus (Rabbit)).